The chain runs to 207 residues: Large ribosomal subunit protein bL25 (207 aa).

Belongs to the bacterial ribosomal protein bL25 family. CTC subfamily. Part of the 50S ribosomal subunit; part of the 5S rRNA/L5/L18/L25 subcomplex. Contacts the 5S rRNA. Binds to the 5S rRNA independently of L5 and L18.

Its function is as follows. This is one of the proteins that binds to the 5S RNA in the ribosome where it forms part of the central protuberance. The protein is Large ribosomal subunit protein bL25 of Bordetella petrii (strain ATCC BAA-461 / DSM 12804 / CCUG 43448).